Reading from the N-terminus, the 533-residue chain is Tyrosine ammonia-lyase (533 aa).

Tyr57 functions as the Proton donor/acceptor in the catalytic mechanism. His87 contacts substrate. A cross-link (5-imidazolinone (Ala-Gly)) is located at residues 146 to 148 (ASG). Position 147 is a 2,3-didehydroalanine (Ser) (Ser147). 2 residues coordinate substrate: Asn200 and Arg305.

Belongs to the TAL/TAM family. Homotetramer; dimer of dimers. Contains an active site 4-methylidene-imidazol-5-one (MIO), which is formed autocatalytically by cyclization and dehydration of residues Ala-Ser-Gly.

It carries out the reaction L-tyrosine = (E)-4-coumarate + NH4(+). The catalysed reaction is L-tyrosine = 3-amino-3-(4-hydroxyphenyl)propanoate. Has ammonia-lyase and, to a lesser extent, aminomutase activity. Catalyzes the rearrangement of L-tyrosine to R-beta-tyrosine and S-beta-tyrosine. Does not accept L-histidine or L-phenylalanine as substrates. The protein is Tyrosine ammonia-lyase of Cupriavidus metallidurans (strain ATCC 43123 / DSM 2839 / NBRC 102507 / CH34) (Ralstonia metallidurans).